The sequence spans 712 residues: uncharacterized protein (712 aa).

Disordered regions lie at residues 1–46 (MAKI…NNLN), 107–264 (NIKP…IPQA), and 370–389 (QPQHQQNQQNQQNQQNQQNQ). Composition is skewed to low complexity over residues 10–46 (INNSLNLNNSNSNSNSNSSININNNNNSNNSNNNNLN), 107–143 (NIKPSQQNSPQNNSNSNNINININNNSNNGNSTSNSS), and 161–173 (TFDNQQTSNNSSN). Polar residues predominate over residues 178–187 (ISPTTSPQLE). 2 stretches are compositionally biased toward low complexity: residues 188–198 (QHQQYQQQQHQ) and 241–264 (PLQQQQQPQPQQQPQPQQQQIPQA).

This is an uncharacterized protein from Dictyostelium discoideum (Social amoeba).